Reading from the N-terminus, the 109-residue chain is ATPase inhibitor mai-2, mitochondrial (109 aa).

Disordered regions lie at residues 18–39 (FSAG…SIRD) and 73–109 (EEVK…LGKE). The segment covering 21-35 (GGHGDGAGRGGGSGG) has biased composition (gly residues). A coiled-coil region spans residues 55 to 109 (YFYKKQKAQLQELREHIQEEVKHHEGQLENHKKVLERHQQRISEIEAQERALGKE).

This sequence belongs to the ATPase inhibitor family.

Its subcellular location is the mitochondrion. Thought to be a regulatory component of the ATP-synthesizing complex in the mitochondria. Activity is pH dependent. In Caenorhabditis elegans, this protein is ATPase inhibitor mai-2, mitochondrial (mai-2).